The following is a 2593-amino-acid chain: Citrinin polyketide synthase (2593 aa).

An N-terminal acylcarrier protein transacylase domain (SAT) region spans residues 70-224 (KLLENLNAWI…YVSVIVDQRR (155 aa)). Cys-139 (nucleophile; for transacylase activity) is an active-site residue. His-258 acts as the Proton donor/acceptor; for transacylase activity in catalysis. Positions 391-806 (DERIAVIGMA…GSNASMVVTQ (416 aa)) constitute a Ketosynthase family 3 (KS3) domain. Residues Cys-555, His-690, and His-729 each act as for beta-ketoacyl synthase activity in the active site. A malonyl-CoA:ACP transacylase (MAT) domain region spans residues 906–1191 (PDPKPVILCF…VAIWLEAGSN (286 aa)). The tract at residues 1291-1424 (PKGLTTFVGY…GTITFQAADS (134 aa)) is N-terminal hotdog fold. The region spanning 1291-1603 (PKGLTTFVGY…YQKVSISGIR (313 aa)) is the PKS/mFAS DH domain. The product template (PT) domain stretch occupies residues 1322 to 1601 (LLSGHIMANA…ISYQKVSISG (280 aa)). The active-site Proton acceptor; for dehydratase activity is His-1326. The C-terminal hotdog fold stretch occupies residues 1451–1603 (VADDILQGRN…YQKVSISGIR (153 aa)). Asp-1508 functions as the Proton donor; for dehydratase activity in the catalytic mechanism. A disordered region spans residues 1636-1662 (VADSPLVDGSSTAVSGTPPTKKAPKAP). Residues 1661-1738 (APSVDITGKM…SLVECMQRIL (78 aa)) enclose the Carrier domain. Residue Ser-1689 is modified to O-(pantetheine 4'-phosphoryl)serine. Catalysis depends on for methyltransferase activity residues Tyr-1955, His-2067, and Glu-2093. A methyltransferase (CMeT) domain region spans residues 1960–2134 (INAVWIQQAE…ATHWKKILTS (175 aa)). The tract at residues 2215–2459 (PAPTGHCVLV…KALPDFDGSL (245 aa)) is NADPH-binding (R) domain.

Requires pantetheine 4'-phosphate as cofactor.

It functions in the pathway mycotoxin biosynthesis. Non-reducing polyketide synthase; part of the gene cluster that mediates the biosynthesis of the mycotoxin citrinin, a hepato-nephrotoxic compound to humans due to inhibition of respiration complex III. The pathway begins with the synthesis of a keto-aldehyde intermediate by the citrinin PKS (pksCT) from successive condensations of 4 malonyl-CoA units, presumably with a simple acetyl-CoA starter unit. Release of the keto-aldehyde intermediate is consistent with the presence of the C-terminal reductive release domain. Mp11 collaborates with pksCT by catalyzing the hydrolysis of ACP-bound acyl intermediates to free the ACP from stalled intermediates. Mpl2 then catalyzes the oxidation of the C-12 methyl of the ketone intermediate to an alcohol intermediate which is further oxidized by the oxidoreductase mpl7 to produce a bisaldehyde intermediate. The fourth catalytic step is catalyzed by the mpl4 aldehyde dehydrogenase. The final transformation is the reduction of C-3 by mpl6 to provide the chemically stable citrinin nucleus. The polypeptide is Citrinin polyketide synthase (Monascus purpureus (Red mold)).